Here is a 415-residue protein sequence, read N- to C-terminus: tRNA(Ile2) 2-agmatinylcytidine synthetase TiaS (415 aa).

Belongs to the TiaS family.

It localises to the cytoplasm. It carries out the reaction cytidine(34) in tRNA(Ile2) + agmatine + ATP + H2O = 2-agmatinylcytidine(34) in tRNA(Ile2) + AMP + 2 phosphate + 2 H(+). Its function is as follows. ATP-dependent agmatine transferase that catalyzes the formation of 2-agmatinylcytidine (agm2C) at the wobble position (C34) of tRNA(Ile2), converting the codon specificity from AUG to AUA. The polypeptide is tRNA(Ile2) 2-agmatinylcytidine synthetase TiaS (Pyrobaculum neutrophilum (strain DSM 2338 / JCM 9278 / NBRC 100436 / V24Sta) (Thermoproteus neutrophilus)).